A 269-amino-acid chain; its full sequence is tRNA pseudouridine synthase A (269 aa).

Residue Asp51 is the Nucleophile of the active site. Tyr109 is a binding site for substrate.

This sequence belongs to the tRNA pseudouridine synthase TruA family. In terms of assembly, homodimer.

It catalyses the reaction uridine(38/39/40) in tRNA = pseudouridine(38/39/40) in tRNA. Functionally, formation of pseudouridine at positions 38, 39 and 40 in the anticodon stem and loop of transfer RNAs. The chain is tRNA pseudouridine synthase A from Aeromonas salmonicida (strain A449).